Consider the following 254-residue polypeptide: MEIDLNADLGEGCGSDEALLDLVTSANIACGWHAGGAQAMRDCVRWAVEKGVSIGAHPSFHDPENFGRKEMDLPASEIYAGVLYQLGALSAIAQAEGGRIAHVKPHGALYNQAAREPEIADAVVSAIHDFDPSLAVFGLAKSGFVDAAQQAGLVAVEEVFADRGYRADGSLVPRSQPGALVDDENEMLARTLEMVRGQRVRAVTGEWVPLNAQTVCLHGDGPHALAFAKRIRDALEAAGIDVHAPGALHAGERA.

It belongs to the LamB/PxpA family. Forms a complex composed of PxpA, PxpB and PxpC.

It carries out the reaction 5-oxo-L-proline + ATP + 2 H2O = L-glutamate + ADP + phosphate + H(+). Functionally, catalyzes the cleavage of 5-oxoproline to form L-glutamate coupled to the hydrolysis of ATP to ADP and inorganic phosphate. This is 5-oxoprolinase subunit A from Burkholderia mallei (strain NCTC 10247).